The following is a 921-amino-acid chain: TRPM8 channel-associated factor 1 (921 aa).

The Peptidase M60 domain occupies 542-841; the sequence is YCWMSTGLYI…TYLQLQEAFG (300 aa).

It belongs to the TCAF family. Interacts with TRPM8 (via N-terminus and C-terminus domains); the interaction inhibits TRPM8 channel activity. Interacts with TRPV6.

The protein localises to the cell membrane. In terms of biological role, positively regulates the plasma membrane cation channel TRPM8 activity. Involved in the recruitment of TRPM8 to the cell surface. Promotes prostate cancer cell migration inhibition in a TRPM8-dependent manner. The chain is TRPM8 channel-associated factor 1 from Pongo abelii (Sumatran orangutan).